A 249-amino-acid polypeptide reads, in one-letter code: Ubiquinone biosynthesis O-methyltransferase (249 aa).

Positions 41, 72, 93, and 136 each coordinate S-adenosyl-L-methionine.

The protein belongs to the methyltransferase superfamily. UbiG/COQ3 family.

It catalyses the reaction a 3-demethylubiquinol + S-adenosyl-L-methionine = a ubiquinol + S-adenosyl-L-homocysteine + H(+). The catalysed reaction is a 3-(all-trans-polyprenyl)benzene-1,2-diol + S-adenosyl-L-methionine = a 2-methoxy-6-(all-trans-polyprenyl)phenol + S-adenosyl-L-homocysteine + H(+). Its pathway is cofactor biosynthesis; ubiquinone biosynthesis. In terms of biological role, O-methyltransferase that catalyzes the 2 O-methylation steps in the ubiquinone biosynthetic pathway. This chain is Ubiquinone biosynthesis O-methyltransferase, found in Mesorhizobium japonicum (strain LMG 29417 / CECT 9101 / MAFF 303099) (Mesorhizobium loti (strain MAFF 303099)).